The following is a 627-amino-acid chain: Carene synthase 2, chloroplastic (627 aa).

The N-terminal 36 residues, 1–36 (MSVISIVPLASKSCLYKSLMSSTHELKALCRPIVTL), are a transit peptide targeting the chloroplast. 3 residues coordinate Mg(2+): Asp378, Asp382, and Asp530. The DDXXD motif motif lies at 378–382 (DDMYD).

It belongs to the terpene synthase family. Tpsd subfamily. Requires Mg(2+) as cofactor. Mn(2+) is required as a cofactor.

It localises to the plastid. The protein resides in the chloroplast. The catalysed reaction is (2E)-geranyl diphosphate = (+)-car-3-ene + diphosphate. It functions in the pathway terpene metabolism; oleoresin biosynthesis. Its function is as follows. Terpene synthase (TPS) involved in defensive oleoresin formation in conifers in response to insect attack (e.g. white pine weevil P.strobi) or other injury. In Picea sitchensis (Sitka spruce), this protein is Carene synthase 2, chloroplastic (TPS-3car2).